Reading from the N-terminus, the 44-residue chain is Brevinin-1PLa (44 aa).

Residues 1-18 constitute a propeptide that is removed on maturation; that stretch reads NAEEERRDEPDETDVEVE. An intrachain disulfide couples Cys-38 to Cys-44.

As to expression, expressed by the skin glands.

It is found in the secreted. In terms of biological role, antimicrobial peptide. The protein is Brevinin-1PLa of Lithobates palustris (Pickerel frog).